A 308-amino-acid polypeptide reads, in one-letter code: Probable manganese-dependent inorganic pyrophosphatase (308 aa).

Mn(2+) is bound by residues histidine 9, aspartate 13, aspartate 15, aspartate 75, histidine 97, and aspartate 149.

Belongs to the PPase class C family. Requires Mn(2+) as cofactor.

The protein resides in the cytoplasm. It carries out the reaction diphosphate + H2O = 2 phosphate + H(+). This is Probable manganese-dependent inorganic pyrophosphatase from Listeria monocytogenes serotype 4a (strain HCC23).